A 382-amino-acid chain; its full sequence is MYIAGVMSGTSLDGIDVALVRIEGSGVESKVELIHFTTVPFCNDIKSEIQQALSIENSNVQLICSLNFKLGLCFANAVKEVCKEANFSLEQLDLIGSHGQTIYHQPKQDGNRIPSTLQIGEPAVIAYETNTTVISNFRTMDMAAGGQGAPLVPYSEVILYRDPSKNRLLQNIGGISNVTVIPNQQSDQNVIAFDTGPGNMIIDEVCQRLFQLSYDQNGEIAKQGRVVDEILTYCMSHPFLKMNPPKSTGREQFGEKFASELLKRFEKHSKENILTTVTMFTANSIVHHYKKFILPYYEIDEVILGGGGSYNSTLVEMLRNGLKDENCAIFIQEDIGYSSEAKEAIAFAILANETHHCNPSNVPSATGAKQSVVLGNITFPPV.

An ATP-binding site is contributed by 9–16; that stretch reads GTSLDGID.

Belongs to the anhydro-N-acetylmuramic acid kinase family.

It carries out the reaction 1,6-anhydro-N-acetyl-beta-muramate + ATP + H2O = N-acetyl-D-muramate 6-phosphate + ADP + H(+). The protein operates within amino-sugar metabolism; 1,6-anhydro-N-acetylmuramate degradation. It participates in cell wall biogenesis; peptidoglycan recycling. In terms of biological role, catalyzes the specific phosphorylation of 1,6-anhydro-N-acetylmuramic acid (anhMurNAc) with the simultaneous cleavage of the 1,6-anhydro ring, generating MurNAc-6-P. Is required for the utilization of anhMurNAc either imported from the medium or derived from its own cell wall murein, and thus plays a role in cell wall recycling. The sequence is that of Anhydro-N-acetylmuramic acid kinase from Bacillus cereus (strain AH820).